We begin with the raw amino-acid sequence, 185 residues long: Ribosome-recycling factor (185 aa).

Positions 142-161 are disordered; that stretch reads LVKDGEAGEDEGARAEKELD.

This sequence belongs to the RRF family.

It is found in the cytoplasm. In terms of biological role, responsible for the release of ribosomes from messenger RNA at the termination of protein biosynthesis. May increase the efficiency of translation by recycling ribosomes from one round of translation to another. This is Ribosome-recycling factor from Paenarthrobacter aurescens (strain TC1).